We begin with the raw amino-acid sequence, 352 residues long: MKLSCTLTQWALYVCPAVLLATQMLLAASSETLKCEGLVSTEQGSCQAAAEEDEGDEDDGDMTQSSEAGFQFKGYTFSKPFHLSVSYDWLILQGPATLIFEGDTLVLHCRAWQDWPLTQVIFYREGSALGPPGPKSEFSITMVQKSDGGHYHCSGIFRSPGPGSREAASPVAITVQELFAAPVLKALPSSEPQEGGSVTLSCQTKLALQRSASRLLFSFYKDGRSLSVRGVSSELKIPKASEEHSGSYWCEAVTEDRQISKQSPQLEIWVQALQKPTASETPPTEALGPLPPPPASSAEQPRFSSPDPHLHHQMQLLLKQIQDVRALLGHLVMELRDLSVYLKPGTTKVADK.

An N-terminal signal peptide occupies residues 1–30 (MKLSCTLTQWALYVCPAVLLATQMLLAASS). The disordered stretch occupies residues 46–65 (CQAAAEEDEGDEDDGDMTQS). Positions 50–61 (AEEDEGDEDDGD) are enriched in acidic residues. Ig-like C2-type domains are found at residues 80-169 (PFHL…EAAS) and 182-260 (PVLK…RQIS). 2 cysteine pairs are disulfide-bonded: C109-C153 and C202-C250. The disordered stretch occupies residues 275–310 (KPTASETPPTEALGPLPPPPASSAEQPRFSSPDPHL).

Monomer or homodimer; disulfide-linked. Highly expressed in spleen. Expressed in immature B-cell and B-cell lines.

It is found in the cytoplasm. Functionally, may be implicated in B-cell differentiation and lymphomagenesis. The chain is Fc receptor-like A (Fcrla) from Mus musculus (Mouse).